Here is a 385-residue protein sequence, read N- to C-terminus: Putative actin-25 (385 aa).

It belongs to the actin family.

The protein resides in the cytoplasm. The protein localises to the cytoskeleton. The catalysed reaction is ATP + H2O = ADP + phosphate + H(+). Its function is as follows. Actins are highly conserved proteins that are involved in various types of cell motility and are ubiquitously expressed in all eukaryotic cells. Multiple isoforms are involved in various cellular functions such as cytoskeleton structure, cell mobility, chromosome movement and muscle contraction. The protein is Putative actin-25 (act25) of Dictyostelium discoideum (Social amoeba).